Reading from the N-terminus, the 136-residue chain is Histone H2A (136 aa).

Over residues 1-11 (MTGGKSAGGKA) the composition is skewed to gly residues. Residues 1-23 (MTGGKSAGGKAGTTKNAQSRSSK) are disordered. An N6-acetyllysine mark is found at lysine 5 and lysine 10. Position 107 is an N5-methylglutamine (glutamine 107). Residue serine 133 is modified to Phosphoserine. Positions 133–134 (SQ) match the [ST]-Q motif motif.

This sequence belongs to the histone H2A family. The nucleosome is a histone octamer containing two molecules each of H2A, H2B, H3 and H4 assembled in one H3-H4 heterotetramer and two H2A-H2B heterodimers. The octamer wraps approximately 147 bp of DNA. In terms of processing, phosphorylated to form H2AS128ph (gamma-H2A) in response to DNA double-strand breaks (DSBs) generated by exogenous genotoxic agents and by stalled replication forks. Phosphorylation is dependent on the DNA damage checkpoint kinases MEC1/ATR and TEL1/ATM, spreads on either side of a detected DSB site and may mark the surrounding chromatin for recruitment of proteins required for DNA damage signaling and repair. Gamma-H2A is removed from the DNA prior to the strand invasion-primer extension step of the repair process and subsequently dephosphorylated. Dephosphorylation is necessary for efficient recovery from the DNA damage checkpoint. Post-translationally, acetylated by ESA1 to form H2AK4ac and H2AK7ac.

It is found in the nucleus. It localises to the chromosome. Its function is as follows. Core component of nucleosome which plays a central role in DNA double strand break (DSB) repair. Nucleosomes wrap and compact DNA into chromatin, limiting DNA accessibility to the cellular machineries which require DNA as a template. Histones thereby play a central role in transcription regulation, DNA repair, DNA replication and chromosomal stability. DNA accessibility is regulated via a complex set of post-translational modifications of histones, also called histone code, and nucleosome remodeling. The sequence is that of Histone H2A (hta1) from Botryotinia fuckeliana (strain B05.10) (Noble rot fungus).